A 629-amino-acid polypeptide reads, in one-letter code: Translation initiation factor IF-2 (629 aa).

Residues 1–20 (MAKNIKTNKKPQQVNKKEMS) form a disordered region. A tr-type G domain is found at 127-297 (HRAPIVTIMG…LLIAEMQDYK (171 aa)). Positions 136 to 143 (GHVDHGKT) are G1. 136 to 143 (GHVDHGKT) contributes to the GTP binding site. The interval 161-165 (GITQA) is G2. Residues 183-186 (DTPG) form a G3 region. Residues 183–187 (DTPGH) and 237–240 (NKCD) each bind GTP. Positions 237 to 240 (NKCD) are G4. A G5 region spans residues 273 to 275 (SAK).

The protein belongs to the TRAFAC class translation factor GTPase superfamily. Classic translation factor GTPase family. IF-2 subfamily.

It localises to the cytoplasm. In terms of biological role, one of the essential components for the initiation of protein synthesis. Protects formylmethionyl-tRNA from spontaneous hydrolysis and promotes its binding to the 30S ribosomal subunits. Also involved in the hydrolysis of GTP during the formation of the 70S ribosomal complex. This Mesoplasma florum (strain ATCC 33453 / NBRC 100688 / NCTC 11704 / L1) (Acholeplasma florum) protein is Translation initiation factor IF-2.